The sequence spans 189 residues: Large ribosomal subunit protein bL9 (189 aa).

Belongs to the bacterial ribosomal protein bL9 family.

Binds to the 23S rRNA. The sequence is that of Large ribosomal subunit protein bL9 from Brucella canis (strain ATCC 23365 / NCTC 10854 / RM-666).